The chain runs to 162 residues: METFPAAWVLALLCLGSHLLQAVISTTVIPSCIPEESEDNCTALVQMEDDPRVAQVLITKCSSDMDGYCLHGHCIYLVDMSEKYCRCEVGYTGLRCEHFFLTVHQPLSREYVALTVILVFLFLIVTAGSMYYFCRWYRNRKSKKSREEYERVTSGGPGLPQV.

The signal sequence occupies residues 1–22 (METFPAAWVLALLCLGSHLLQA). Residues 23–55 (VISTTVIPSCIPEESEDNCTALVQMEDDPRVAQ) constitute a propeptide that is removed on maturation. Residue Asn-40 is glycosylated (N-linked (GlcNAc...) asparagine). Residues 57–97 (LITKCSSDMDGYCLHGHCIYLVDMSEKYCRCEVGYTGLRCE) enclose the EGF-like domain. Disulfide bonds link Cys-61/Cys-74, Cys-69/Cys-85, and Cys-87/Cys-96. A propeptide spans 102–162 (TVHQPLSREY…TSGGPGLPQV (61 aa)) (removed in mature form). A helical membrane pass occupies residues 113 to 133 (ALTVILVFLFLIVTAGSMYYF).

As to quaternary structure, interacts with EGFR and ERBB4.

The protein localises to the secreted. The protein resides in the extracellular space. It localises to the cell membrane. Its function is as follows. Ligand of the EGF receptor/EGFR and ERBB4. Stimulates EGFR and ERBB4 tyrosine phosphorylation. Contributes to inflammation, wound healing, tissue repair, and oocyte maturation by regulating angiogenesis and vascular remodeling and by stimulating cell proliferation. The sequence is that of Proepiregulin (Ereg) from Rattus norvegicus (Rat).